Reading from the N-terminus, the 262-residue chain is Glutamate racemase (262 aa).

Substrate contacts are provided by residues 5–6 (DS) and 37–38 (YG). The Proton donor/acceptor role is filled by cysteine 69. 70-71 (NT) is a substrate binding site. Cysteine 181 serves as the catalytic Proton donor/acceptor. 182 to 183 (TH) contributes to the substrate binding site.

Belongs to the aspartate/glutamate racemases family.

It catalyses the reaction L-glutamate = D-glutamate. The protein operates within cell wall biogenesis; peptidoglycan biosynthesis. Provides the (R)-glutamate required for cell wall biosynthesis. The chain is Glutamate racemase from Buchnera aphidicola subsp. Acyrthosiphon pisum (strain APS) (Acyrthosiphon pisum symbiotic bacterium).